The following is a 650-amino-acid chain: Serine/threonine-protein kinase oca2 (650 aa).

Residues 1 to 14 show a composition bias toward polar residues; that stretch reads MSVTPPNVQFNLNG. Disordered stretches follow at residues 1 to 210 and 222 to 288; these read MSVT…PHDI and HHGK…KSSA. At serine 72 the chain carries Phosphoserine. A compositionally biased stretch (basic and acidic residues) spans 78 to 98; the sequence is NHIDPKLAEDRYRSSAARHFE. Positions 140-154 are enriched in polar residues; that stretch reads PSGSTGYTSPALSQN. Composition is skewed to basic residues over residues 222 to 231 and 245 to 257; these read HHGKHGHHGH and HDKHDKHDKHEKH. Positions 258-279 are enriched in basic and acidic residues; the sequence is HSSLDLRRFFKSHQKTDKEKKP. The residue at position 286 (serine 286) is a Phosphoserine. The 313-residue stretch at 302–614 folds into the Protein kinase domain; that stretch reads GKFGRMLGSG…IHRVFADNWI (313 aa). Residues 308 to 316 and lysine 331 contribute to the ATP site; that span reads LGSGAGGSV. The active-site Proton acceptor is the aspartate 425. Positions 549–570 are disordered; the sequence is PIRKTDESHSPNSKTDNSSTHK.

Belongs to the protein kinase superfamily. Ser/Thr protein kinase family.

It localises to the cytoplasm. The catalysed reaction is L-seryl-[protein] + ATP = O-phospho-L-seryl-[protein] + ADP + H(+). The enzyme catalyses L-threonyl-[protein] + ATP = O-phospho-L-threonyl-[protein] + ADP + H(+). Overexpression causes cell cycle arrest. The protein is Serine/threonine-protein kinase oca2 of Schizosaccharomyces pombe (strain 972 / ATCC 24843) (Fission yeast).